A 410-amino-acid polypeptide reads, in one-letter code: MKPAYPPLLLQMSPAYTPRPLKNLFTANQCWAHLLEEGGLRDIEVETVTKMLACGTSILGVKHYTCGNHSCPHVKYLCNTCHCRACPSCGKKATDQWITVQNNRLPDCPWQHLVFTLPDTLWPLFFYNRWLLDALFRLAADNLIYAAKRRGLRVGIFGALHTYGRRLNWHPHVHLSVTAGGLDEQGVWKNLSFHKEALRRRWMWLVRDYLLGQPLSQLTMPPPLAHILCESDWRRLILAAGGQHWHIHLSKKTKNGRKTVNYLGRYLKKPPISGSRLAHYTNGATLRFTYLDHRTQAYQQETLSQADMLFRVVQHIPEKHFRMIRYFGFLANRVCGQYLPKVYEALKMATPGPTPKLYFAPMAKAFLNVDPFRCVLCGARMVYTAAISGLTVQGLNLNAQAIAQMRYVKP.

This sequence belongs to the transposase 32 family.

Involved in the transposition of the insertion sequence. This chain is Transposase for insertion sequence element IS801, found in Pseudomonas savastanoi pv. phaseolicola (Pseudomonas syringae pv. phaseolicola).